A 225-amino-acid polypeptide reads, in one-letter code: Lipoarabinomannan carrier protein LprG (225 aa).

Positions 1–21 are cleaved as a signal peptide; that stretch reads MRNRIRLALIPVAVAAIALAG. Cys22 carries N-palmitoyl cysteine lipidation. Residue Cys22 is the site of S-diacylglycerol cysteine attachment.

The protein belongs to the LppX/LprAFG lipoprotein family. Modified by Lgt on Cys-22 with an S-linked diacylglyceral, signal peptide is removed by LspA, Cys-22 is further modifed with a fatty acid on its amino group by Lnt yielding a triacylated protein.

It is found in the cell inner membrane. Helps membrane protein MAB_2807 (P55) transport triacylglycerides (TAG) across the inner cell membrane into the periplasm and probably ultimately to the outer membrane. Binds TAG in its hydrophobic cavity and transfers it between lipid bilayers. TAG probably regulates lipid metabolism and growth regulation and plays a structural role in the outer membrane. Also binds mannosides, lipoarabinomannan and lipomannan and various glycolipids in the same cavity. The polypeptide is Lipoarabinomannan carrier protein LprG (Mycobacteroides abscessus (strain ATCC 19977 / DSM 44196 / CCUG 20993 / CIP 104536 / JCM 13569 / NCTC 13031 / TMC 1543 / L948) (Mycobacterium abscessus)).